Here is a 209-residue protein sequence, read N- to C-terminus: Holliday junction branch migration complex subunit RuvA (209 aa).

The domain I stretch occupies residues 1 to 70 (MINYLRGQAI…EEQPLLYGFG (70 aa)). Residues 71-149 (TAPERELFRQ…AWRQLREATT (79 aa)) are domain II. A flexible linker region spans residues 150–158 (TITAILPAA). The domain III stretch occupies residues 158 to 209 (AAILEDVQMTLLALGYSQEEIDRAMAVLSQDALFSKNTQPEDWIKGAINWLG).

It belongs to the RuvA family. Homotetramer. Forms an RuvA(8)-RuvB(12)-Holliday junction (HJ) complex. HJ DNA is sandwiched between 2 RuvA tetramers; dsDNA enters through RuvA and exits via RuvB. An RuvB hexamer assembles on each DNA strand where it exits the tetramer. Each RuvB hexamer is contacted by two RuvA subunits (via domain III) on 2 adjacent RuvB subunits; this complex drives branch migration. In the full resolvosome a probable DNA-RuvA(4)-RuvB(12)-RuvC(2) complex forms which resolves the HJ.

Its subcellular location is the cytoplasm. In terms of biological role, the RuvA-RuvB-RuvC complex processes Holliday junction (HJ) DNA during genetic recombination and DNA repair, while the RuvA-RuvB complex plays an important role in the rescue of blocked DNA replication forks via replication fork reversal (RFR). RuvA specifically binds to HJ cruciform DNA, conferring on it an open structure. The RuvB hexamer acts as an ATP-dependent pump, pulling dsDNA into and through the RuvAB complex. HJ branch migration allows RuvC to scan DNA until it finds its consensus sequence, where it cleaves and resolves the cruciform DNA. This Microcystis aeruginosa (strain NIES-843 / IAM M-2473) protein is Holliday junction branch migration complex subunit RuvA.